Here is a 312-residue protein sequence, read N- to C-terminus: tRNA pseudouridine synthase B (312 aa).

Asp48 acts as the Nucleophile in catalysis.

Belongs to the pseudouridine synthase TruB family. Type 1 subfamily.

It catalyses the reaction uridine(55) in tRNA = pseudouridine(55) in tRNA. Its function is as follows. Responsible for synthesis of pseudouridine from uracil-55 in the psi GC loop of transfer RNAs. The protein is tRNA pseudouridine synthase B of Haemophilus influenzae (strain ATCC 51907 / DSM 11121 / KW20 / Rd).